The sequence spans 294 residues: Aquaporin NIP2-2 (294 aa).

The next 2 helical transmembrane spans lie at 54–74 (VISE…AASI) and 88–108 (SVAG…ISGA). The NPA 1 signature appears at 111-113 (NPA). Helical transmembrane passes span 129–151 (VPFY…KAVL), 169–189 (ALLI…AVAT), and 197–217 (LAGL…GPVS). Residues 222–224 (NPA) carry the NPA 2 motif. A helical membrane pass occupies residues 235–255 (VFTGLWIYFLGPVIGTLSGAW).

This sequence belongs to the MIP/aquaporin (TC 1.A.8) family. NIP (TC 1.A.8.12) subfamily.

It is found in the membrane. Aquaporins facilitate the transport of water and small neutral solutes across cell membranes. The chain is Aquaporin NIP2-2 (NIP2-2) from Zea mays (Maize).